Here is a 543-residue protein sequence, read N- to C-terminus: Zinc metalloproteinase (543 aa).

The first 24 residues, methionine 1–alanine 24, serve as a signal peptide directing secretion. Residues alanine 25–threonine 207 constitute a propeptide that is removed on maturation. Histidine 377 serves as a coordination point for Zn(2+). Glutamate 378 is an active-site residue. Positions 381 and 401 each coordinate Zn(2+). Residue histidine 463 is the Proton donor of the active site.

The protein belongs to the peptidase M4 family. It depends on Zn(2+) as a cofactor.

The protein resides in the secreted. Functionally, cleaves collagen, gelatin, casein, alpha-1-antitrypsin, and bovine insulin. May play a role in the pathogenesis of legionnaires disease. The polypeptide is Zinc metalloproteinase (Legionella pneumophila).